The primary structure comprises 372 residues: MGANTFGKLLAVTTFGESHGPAIGCVIDGCPPGLELAAEEFAHDLQRRATGRSRHTSARREADEVEILSGVYEGLTTGTPIALLIRNTDQRSKDYATIARQFRPGHADYTYWQKYGIRDPRGGGRSSARETTMRVAAAVVAKKWLQQRYGVTVRGFLSQLGEIRPEGFAWDAIEDNPFFWPHAAQVPALEAYMDALRKSGDSVGARVDVVAEGVPPGWGEPIYGKLDGELAAALMGINAVKGVEIGAGFGSAVQKGTEHRDLMTPLGFLSNHAGGIIGGIATGQPIIVSIALKPTSSLRLPGETVDVDGCAVQVITKGRHDPCVGIRAPPIAEAMVALVLMDQALRHRAQCGDVGEMSPCIPEGVGLRNADD.

Positions 48 and 54 each coordinate NADP(+). Residues 125–127 (RSS), 238–239 (NA), G278, 293–297 (KPTSS), and R319 each bind FMN.

This sequence belongs to the chorismate synthase family. Homotetramer. Requires FMNH2 as cofactor.

It catalyses the reaction 5-O-(1-carboxyvinyl)-3-phosphoshikimate = chorismate + phosphate. It participates in metabolic intermediate biosynthesis; chorismate biosynthesis; chorismate from D-erythrose 4-phosphate and phosphoenolpyruvate: step 7/7. In terms of biological role, catalyzes the anti-1,4-elimination of the C-3 phosphate and the C-6 proR hydrogen from 5-enolpyruvylshikimate-3-phosphate (EPSP) to yield chorismate, which is the branch point compound that serves as the starting substrate for the three terminal pathways of aromatic amino acid biosynthesis. This reaction introduces a second double bond into the aromatic ring system. The sequence is that of Chorismate synthase from Xylella fastidiosa (strain M23).